A 1693-amino-acid polypeptide reads, in one-letter code: Non-structural polyprotein pORF1 (1693 aa).

The Alphavirus-like MT domain occupies 56–240 (VFRPEVFWNH…HDVSNLRSWI (185 aa)). A methyltransferase region spans residues 60 to 240 (EVFWNHPIQR…HDVSNLRSWI (181 aa)). Residues 241–439 (RTTKVTGDHP…FYAQCRRWLS (199 aa)) form a Y-domain region. C434 and C481 form a disulfide bridge. The protease stretch occupies residues 442 to 509 (FHLDPRVLVF…EAYEGSDVDP (68 aa)). Residues 510–691 (AESAISDISG…FSPGHVWESA (182 aa)) are zinc-binding. 3 residues coordinate Zn(2+): H671, E673, and H686. The disordered stretch occupies residues 712 to 771 (PSPAQPDLGFTSEPSIPSRAATPTPAAPLPPPAPDPSPTLSAPARGEPAPGATARAPAIT). Positions 712–778 (PSPAQPDLGF…AITHQTARHR (67 aa)) are hinge. Low complexity predominate over residues 725-735 (PSIPSRAATPT). Residues 736–748 (PAAPLPPPAPDPS) show a composition bias toward pro residues. Residues 775–921 (ARHRRLLFTY…LYLPELAARW (147 aa)) form the Macro domain. Residues 785–942 (PDGSKVFAGS…TITEDVARTA (158 aa)) are X-domain. In terms of domain architecture, (+)RNA virus helicase ATP-binding spans 934-1082 (ITEDVARTAN…RPDLAPTSWW (149 aa)). An NTPase/helicase region spans residues 960-1204 (GCRVTPGVVQ…ISDAIVNNFF (245 aa)). Residue 975-982 (GVPGSGKS) coordinates ATP. The region spanning 1083 to 1216 (HVTHRCPADV…GGEIGHQRPS (134 aa)) is the (+)RNA virus helicase C-terminal domain. An RNA-directed RNA polymerase region spans residues 1207-1693 (GGEIGHQRPS…LTNSILCRVE (487 aa)). Residues 1454-1565 (SMVFENDFSE…LCSEYRQSPG (112 aa)) enclose the RdRp catalytic domain.

Belongs to the hepevirus non-structural polyprotein family. The protease domain interacts with host EIF2AK4 (via C-terminus); this interaction inhibits dimerization of EIF2AK4 and prevents EIF2AK4-mediated phosphorylation of host EIF2A. The cofactor is Mg(2+). In terms of processing, ORF1 polyprotein does not seem to be processed into distinct enzymatic domains by a viral protease belonging to ORF1, but could be processed by a host serine protease like thrombin.

It is found in the host cytoplasm. It localises to the host perinuclear region. It carries out the reaction RNA(n) + a ribonucleoside 5'-triphosphate = RNA(n+1) + diphosphate. The enzyme catalyses GTP + S-adenosyl-L-methionine = N(7)-methyl-GTP + S-adenosyl-L-homocysteine. Putative protease: Inhibited by chymostatin. Functionally, methyltransferase: Displays a capping enzyme activity. This function is necessary since all viral RNAs are synthesized in the cytoplasm, and host capping enzymes are restricted to the nucleus. The enzymatic reaction involves a covalent link between 7-methyl-GMP and the methyltransferase, whereas eukaryotic capping enzymes form a covalent complex only with GMP. Methyltransferase catalyzes transfer of a methyl group from S-adenosylmethionine to GTP and GDP to yield m(7)GTP or m(7)GDP. GDP is a better substrate than GTP. This enzyme also displays guanylyltransferase activity to form a covalent complex, methyltransferase-m(7)GMP, from which 7-methyl-GMP is transferred to the mRNA to create the cap structure. Y-domain: Indispensable for virus replication. Its function is as follows. Putative protease: The putative protease domain although necessary for replication of the virus may not be a protease but rather a structural Zn(2+)-binding domain. Inhibits induction of IFN-beta by MDA5 and RIG-I pathways and down-regulates the expression of MDA5. In terms of biological role, NTPase/helicase: Multi-functional protein that exhibits NTPase and RNA unwinding activities. Hydrolyzes all NTPs efficiently and unwinds RNA duplexes containing 5' overhangs. Possesses a sequence independent RNA-5'-triphosphatase (RTPase) activity suggestive of its role in forming viral cap structure. Also participates in viral genome replication, RNA translocation and genome packaging/unpackaging. Functionally, RNA-directed RNA polymerase: Plays an essential role in the virus replication. Binds to the 3'-end of the genomic RNA to initiate viral replication. This is Non-structural polyprotein pORF1 from Hepatitis E virus genotype 1 (isolate Human/Pakistan/Sar-55) (HEV-1).